The chain runs to 106 residues: Urease subunit beta (106 aa).

It belongs to the urease beta subunit family. In terms of assembly, heterotrimer of UreA (gamma), UreB (beta) and UreC (alpha) subunits. Three heterotrimers associate to form the active enzyme.

It localises to the cytoplasm. It carries out the reaction urea + 2 H2O + H(+) = hydrogencarbonate + 2 NH4(+). It participates in nitrogen metabolism; urea degradation; CO(2) and NH(3) from urea (urease route): step 1/1. The chain is Urease subunit beta from Citrobacter koseri (strain ATCC BAA-895 / CDC 4225-83 / SGSC4696).